Here is a 585-residue protein sequence, read N- to C-terminus: Optineurin (585 aa).

The interval 1-32 (MSHQPLSCLTEKGDSSCETPGNGPSNMVHPNL) is disordered. Polar residues predominate over residues 16–25 (SCETPGNGPS). Positions 38-181 (EELLQQMKEL…VSELQLKLNS (144 aa)) form a coiled coil. An interaction with Rab8 region spans residues 58 to 220 (MKLNNQAMKG…GPTRTDSISM (163 aa)). Positions 187–192 (DSFVEI) match the LIR motif. Phosphoserine occurs at positions 188 and 209. 2 disordered regions span residues 200 to 220 (EGAMKEMRNSAGPTRTDSISM) and 269 to 299 (FEKKANGHSAIETQTEGSTQKEEEDKDPESV). A coiled-coil region spans residues 244 to 512 (CLREGNQKVE…LLKENNDFED (269 aa)). The residue at position 346 (Ser346) is a Phosphoserine. Positions 415–585 (TKQQAEKVDK…LQIHVMDCII (171 aa)) are interaction with HD. The segment at 416–525 (KQQAEKVDKV…RQSLMEMQCR (110 aa)) is interaction with MYO6. Positions 478 to 483 (DFHAER) match the UBAN motif. Ser531 is subject to Phosphoserine. The segment at 555–585 (PRSIPIHSCPKCGEVLPDIDTLQIHVMDCII) adopts a CCHC NOA-type zinc-finger fold. 4 residues coordinate Zn(2+): Cys563, Cys566, His579, and Cys583.

In terms of assembly, self-associates. Interacts with HD. Interacts with GTF3A. Interacts with MYO6. Interacts (via UBAN) with ubiquitinated TFRC. Interacts with GTP-bound Rab8 (RAB8A and/or RAB8B). Interacts with TBC1D17. Interacts with TBK1. Interacts with TRAF3. Binds to linear ubiquitin chains. Interacts with LC3 family members MAP1LC3A, MAP1LC3B, GABARAP, GABARAPL1 and GABARAPL2; OPTN phosphorylation increases the association (at least with MAP1LC3B). Interacts with RAB12; the interaction may be indirect. Interacts with TBK1; this interaction leads to the Golgi localization of TBK1 and its subsequent activation. Interacts with palmitoyltransferase ZDHHC17/HIP14; the interaction does not lead to palmitoylation of OPTN. Interacts with CYLD. Interacts with TOM1; the interaction is indirect and is mediated by MYO6, which acts as a bridge between TOM1 and OPTN. Interacts with USP12; the interaction is independent of USP12 deubiquitinase activity and may be involved in regulation of autophagic flux. Phosphorylated by TBK1, leading to restrict bacterial proliferation in case of infection.

The protein localises to the cytoplasm. It localises to the perinuclear region. Its subcellular location is the golgi apparatus. The protein resides in the trans-Golgi network. It is found in the cytoplasmic vesicle. The protein localises to the autophagosome. It localises to the recycling endosome. Plays an important role in the maintenance of the Golgi complex, in membrane trafficking, in exocytosis, through its interaction with myosin VI and Rab8. Links myosin VI to the Golgi complex and plays an important role in Golgi ribbon formation. Negatively regulates the induction of IFNB in response to RNA virus infection. Plays a neuroprotective role in the eye and optic nerve. Probably part of the TNF-alpha signaling pathway that can shift the equilibrium toward induction of cell death. May act by regulating membrane trafficking and cellular morphogenesis via a complex that contains Rab8 and huntingtin (HD). Mediates the interaction of Rab8 with the probable GTPase-activating protein TBC1D17 during Rab8-mediated endocytic trafficking, such as that of transferrin receptor (TFRC/TfR); regulates Rab8 recruitment to tubules emanating from the endocytic recycling compartment. Autophagy receptor that interacts directly with both the cargo to become degraded and an autophagy modifier of the MAP1 LC3 family; targets ubiquitin-coated bacteria (xenophagy) and appears to function in the same pathway as SQSTM1 and CALCOCO2/NDP52. The protein is Optineurin (Optn) of Rattus norvegicus (Rat).